Consider the following 122-residue polypeptide: Ribonuclease P protein component (122 aa).

This sequence belongs to the RnpA family. In terms of assembly, consists of a catalytic RNA component (M1 or rnpB) and a protein subunit.

The catalysed reaction is Endonucleolytic cleavage of RNA, removing 5'-extranucleotides from tRNA precursor.. In terms of biological role, RNaseP catalyzes the removal of the 5'-leader sequence from pre-tRNA to produce the mature 5'-terminus. It can also cleave other RNA substrates such as 4.5S RNA. The protein component plays an auxiliary but essential role in vivo by binding to the 5'-leader sequence and broadening the substrate specificity of the ribozyme. This is Ribonuclease P protein component from Lactobacillus gasseri (strain ATCC 33323 / DSM 20243 / BCRC 14619 / CIP 102991 / JCM 1131 / KCTC 3163 / NCIMB 11718 / NCTC 13722 / AM63).